The chain runs to 1068 residues: Huntingtin-interacting protein 1-related protein (1068 aa).

An N-acetylmethionine modification is found at Met1. Residues 23 to 151 (EREQFDKTQA…SFHLKHPQFP (129 aa)) enclose the ENTH domain. A coiled-coil region spans residues 347-599 (SVKDDRDLQI…RSSQEQGELQ (253 aa)). 3 disordered regions span residues 424–443 (LEGE…ASAT), 529–549 (ARAQ…SSRL), and 582–608 (AALS…RESQ). Basic and acidic residues-rich tracts occupy residues 425 to 443 (EGER…ASAT) and 539 to 549 (EQSKSELSSRL). Low complexity predominate over residues 590 to 600 (RSSQEQGELQG). The 242-residue stretch at 771–1012 (SLDVRQEELG…ELRKQHYVLA (242 aa)) folds into the I/LWEQ domain. The interval 867–924 (RWTEGLISASKAVGWGATQLVEAADKVVLHTGKYEELIVCSHEIAASTAQLVAASKVK) is important for actin binding. The tract at residues 1016–1060 (GSPGEEVAIRPSTAPRSVTTKKPPLAQKPSVAPRQDHQLDKKDGI) is disordered. Phosphoserine is present on Ser1017. The segment covering 1049–1059 (RQDHQLDKKDG) has biased composition (basic and acidic residues).

This sequence belongs to the SLA2 family. Homodimer. Interacts with actin; homodimerization promotes actin binding. Interacts with CLTB. Interacts with HIP1. Interacts (via ENTH and I/LWEQ domains) with BCL2L10. In terms of tissue distribution, brain, heart, kidney, pancreas, and liver, but not in lung or placenta.

The protein localises to the cytoplasm. The protein resides in the perinuclear region. It is found in the endomembrane system. Its subcellular location is the cytoplasmic vesicle. It localises to the clathrin-coated vesicle membrane. Functionally, component of clathrin-coated pits and vesicles, that may link the endocytic machinery to the actin cytoskeleton. Binds 3-phosphoinositides (via ENTH domain). May act through the ENTH domain to promote cell survival by stabilizing receptor tyrosine kinases following ligand-induced endocytosis. The polypeptide is Huntingtin-interacting protein 1-related protein (HIP1R) (Homo sapiens (Human)).